Consider the following 372-residue polypeptide: Cyclin-J (372 aa).

The Cyclin N-terminal domain occupies 15 to 143 (DIHQALRYKE…LLETFQWNLC (129 aa)).

The protein belongs to the cyclin family.

The sequence is that of Cyclin-J (CCNJ) from Homo sapiens (Human).